Consider the following 398-residue polypeptide: Protochlorophyllide reductase, chloroplastic (398 aa).

A chloroplast-targeting transit peptide spans 1–64 (MALQAASLVS…NQQIGAIRAQ (64 aa)).

This sequence belongs to the short-chain dehydrogenases/reductases (SDR) family. POR subfamily.

Its subcellular location is the plastid. It localises to the chloroplast. It catalyses the reaction chlorophyllide a + NADP(+) = protochlorophyllide a + NADPH + H(+). It participates in porphyrin-containing compound metabolism; chlorophyll biosynthesis. Phototransformation of protochlorophyllide (Pchlide) to chlorophyllide (Chlide). In Cucumis sativus (Cucumber), this protein is Protochlorophyllide reductase, chloroplastic (PORA).